A 392-amino-acid chain; its full sequence is Protein FAM53C (392 aa).

An N-acetylmethionine modification is found at Met-1. The tract at residues 77–120 (HLRPPSRGSSPKEQPLSQVLRPEPPDPEKLPVPPAPPSKRHCRS) is disordered. The segment covering 83 to 93 (RGSSPKEQPLS) has biased composition (polar residues). Ser-122 and Ser-162 each carry phosphoserine. 3 disordered regions span residues 141 to 167 (LWTP…PKRV), 203 to 303 (SRPC…LDFD), and 340 to 364 (SASC…EGAV). Residues 203–215 (SRPCATSPQSGSW) are compositionally biased toward polar residues. Residues Ser-232, Ser-234, Ser-255, Ser-273, and Ser-299 each carry the phosphoserine modification. Over residues 241 to 256 (ASRFLPSARSSPASSP) the composition is skewed to low complexity. A compositionally biased stretch (basic and acidic residues) spans 278 to 303 (LDARKTGVKRRHEEDPRRLRPSLDFD).

It belongs to the FAM53 family.

The sequence is that of Protein FAM53C from Pongo abelii (Sumatran orangutan).